Here is a 197-residue protein sequence, read N- to C-terminus: Nucleoid occlusion factor SlmA (197 aa).

Residues 7–67 (INRREHILQC…GLIEFIEDAI (61 aa)) enclose the HTH tetR-type domain. The H-T-H motif DNA-binding region spans 30–49 (TTAKLAAEVGVSEAALYRHF). Residues 110–130 (ALLGENERLRSRIDVLFAKIE) adopt a coiled-coil conformation.

It belongs to the nucleoid occlusion factor SlmA family. As to quaternary structure, homodimer. Interacts with FtsZ.

It is found in the cytoplasm. Its subcellular location is the nucleoid. Functionally, required for nucleoid occlusion (NO) phenomenon, which prevents Z-ring formation and cell division over the nucleoid. Acts as a DNA-associated cell division inhibitor that binds simultaneously chromosomal DNA and FtsZ, and disrupts the assembly of FtsZ polymers. SlmA-DNA-binding sequences (SBS) are dispersed on non-Ter regions of the chromosome, preventing FtsZ polymerization at these regions. This chain is Nucleoid occlusion factor SlmA, found in Shewanella frigidimarina (strain NCIMB 400).